A 232-amino-acid chain; its full sequence is Large ribosomal subunit protein uL1 (232 aa).

The protein belongs to the universal ribosomal protein uL1 family. Part of the 50S ribosomal subunit.

Binds directly to 23S rRNA. The L1 stalk is quite mobile in the ribosome, and is involved in E site tRNA release. Functionally, protein L1 is also a translational repressor protein, it controls the translation of the L11 operon by binding to its mRNA. The polypeptide is Large ribosomal subunit protein uL1 (Burkholderia cenocepacia (strain HI2424)).